We begin with the raw amino-acid sequence, 107 residues long: U1-lycotoxin-Ls1e (107 aa).

Residues 1-20 form the signal peptide; that stretch reads MMKVLVVFALLVTLISYSSS. A propeptide spanning residues 21-41 is cleaved from the precursor; sequence EGIDDLEADELLSLMANEQTR. Intrachain disulfides connect C44–C59, C51–C68, C58–C86, and C70–C84.

It belongs to the neurotoxin 19 (CSTX) family. 04 (U1-Lctx) subfamily. Expressed by the venom gland.

The protein resides in the secreted. This chain is U1-lycotoxin-Ls1e, found in Lycosa singoriensis (Wolf spider).